Consider the following 780-residue polypeptide: Pentatricopeptide repeat-containing protein At1g79540 (780 aa).

17 PPR repeats span residues 91-125 (SRES…GVSV), 126-160 (DSYC…DCRP), 161-196 (DVFT…NCSP), 197-231 (NLYT…GISP), 232-266 (NRVT…GNYP), 267-301 (DSVA…GFVL), 302-336 (GLRG…NIKP), 337-371 (DIIL…GISP), 372-406 (DTYC…ESFP), 407-441 (DACT…GCSP), 442-476 (SVAT…RPAS), 481-515 (LSHS…GSSP), 516-550 (DIVS…GLSP), 551-585 (DSVT…RHSP), 653-687 (TLGP…KILV), 688-722 (TPPS…NFKL), and 723-758 (MPRV…GYNV).

This sequence belongs to the PPR family. P subfamily.

This Arabidopsis thaliana (Mouse-ear cress) protein is Pentatricopeptide repeat-containing protein At1g79540.